Here is a 309-residue protein sequence, read N- to C-terminus: Tagatose-6-phosphate kinase (309 aa).

It belongs to the carbohydrate kinase PfkB family. LacC subfamily.

The catalysed reaction is D-tagatofuranose 6-phosphate + ATP = D-tagatofuranose 1,6-bisphosphate + ADP + H(+). The protein operates within carbohydrate metabolism; D-tagatose 6-phosphate degradation; D-glyceraldehyde 3-phosphate and glycerone phosphate from D-tagatose 6-phosphate: step 1/2. The protein is Tagatose-6-phosphate kinase of Streptococcus pyogenes serotype M1.